The sequence spans 31 residues: Palustrin-2a (31 aa).

C23 and C29 form a disulfide bridge.

In terms of tissue distribution, expressed by the skin glands.

Its subcellular location is the secreted. Its function is as follows. Antimicrobial activity against Gram-negative bacterium E.coli. This chain is Palustrin-2a, found in Lithobates palustris (Pickerel frog).